A 271-amino-acid polypeptide reads, in one-letter code: MAVITGASSGIGLECVLMLLNQGYKVYALSRHATLCVALNHALCECVDIDVSDSNALKEVFLNISAKEDHCDVLINSAGYGVFGSVEDTPIEEVKKQFSVNFFALCEVVQLCLPLLKNKPYSKIFNLSSIAGRVSMLFLGHYSASKHALEAYSDALRLELKPFNVQVCLIEPGPVKSNWEKTAFENDERKDSVYALEVNAAKSFYSGVYQKALNAKEVAQKIVFLSMSHKIKARYLIGLKTQLLLALYQILPSSWYDSLFRLVVLGRKRDA.

1–25 (MAVITGASSGIGLECVLMLLNQGYK) contributes to the NAD(+) binding site. Position 129 (Ser-129) interacts with substrate. Tyr-142 acts as the Proton acceptor in catalysis.

The protein belongs to the short-chain dehydrogenases/reductases (SDR) family.

This Helicobacter pylori (strain J99 / ATCC 700824) (Campylobacter pylori J99) protein is Probable short-chain type dehydrogenase/reductase VdlC (vdlC).